A 233-amino-acid chain; its full sequence is UPF0502 protein Sden_2282 (233 aa).

The segment covering 178-198 (TQHQRPPQTPHLSSRTNVDNS) has biased composition (polar residues). The tract at residues 178 to 204 (TQHQRPPQTPHLSSRTNVDNSYESDER) is disordered.

This sequence belongs to the UPF0502 family.

In Shewanella denitrificans (strain OS217 / ATCC BAA-1090 / DSM 15013), this protein is UPF0502 protein Sden_2282.